The sequence spans 926 residues: Piwi-like protein Ago3 (926 aa).

The interval 1–62 (MADPGKGRGR…PSTSGVSIGG (62 aa)) is disordered. A compositionally biased stretch (low complexity) spans 26-56 (SPSQSESQSPESTPEQSTAPSTIASATPSTS). Positions 339 to 455 (TVLSLIKEVV…LIPELCQLTG (117 aa)) constitute a PAZ domain. Residues 620-912 (LVVAICSTKR…LSYLVGQCVH (293 aa)) enclose the Piwi domain. Residue glutamine 672 coordinates Mg(2+). Residues aspartate 697, glutamate 735, aspartate 767, and histidine 901 contribute to the active site. Residue leucine 926 coordinates Mg(2+).

This sequence belongs to the argonaute family. Piwi subfamily. In terms of assembly, interacts (when symmetrically methylated) with Papi/TDRKH. Interacts with Vasa. Mg(2+) is required as a cofactor. Arginine methylation is required for the interaction with Tudor domain-containing protein Papi/TDRKH. In terms of tissue distribution, highly expressed in the larval testis, pupal ovary and adult eggs.

The protein resides in the cytoplasm. Endoribonuclease that plays a central role during spermatogenesis by repressing transposable elements and preventing their mobilization, which is essential for the germline integrity. Plays an essential role in meiotic differentiation of spermatocytes, germ cell differentiation and in self-renewal of spermatogonial stem cells. Its presence in oocytes suggests that it may participate in similar functions during oogenesis in females. Acts via the piRNA metabolic process, which mediates the repression of transposable elements during meiosis by forming complexes composed of piRNAs and Piwi proteins and govern the methylation and subsequent repression of transposons. Directly binds piRNAs, a class of 24 to 30 nucleotide RNAs that are generated by a Dicer-independent mechanism and are primarily derived from transposons and other repeated sequence elements. Strongly prefers a have adenine at position 10 of their guide (g10A preference). Plays a key role in the piRNA amplification loop, also named ping-pong amplification cycle: antisense piRNA-bound Siwi and sense piRNA-bound Ago3 reciprocally cleave complementary transcripts, to couple the amplification of piRNAs with the repression of transposable elements. This is Piwi-like protein Ago3 (AGO3) from Bombyx mori (Silk moth).